The primary structure comprises 282 residues: Biotin synthase (282 aa).

A Radical SAM core domain is found at 1–228 (MQEIFLCSIS…NARLMAAGGR (228 aa)). The [4Fe-4S] cluster site is built by cysteine 17, cysteine 21, and cysteine 24. The [2Fe-2S] cluster site is built by cysteine 61, cysteine 96, cysteine 154, and arginine 221.

This sequence belongs to the radical SAM superfamily. Biotin synthase family. In terms of assembly, homodimer. [4Fe-4S] cluster serves as cofactor. It depends on [2Fe-2S] cluster as a cofactor.

It carries out the reaction (4R,5S)-dethiobiotin + (sulfur carrier)-SH + 2 reduced [2Fe-2S]-[ferredoxin] + 2 S-adenosyl-L-methionine = (sulfur carrier)-H + biotin + 2 5'-deoxyadenosine + 2 L-methionine + 2 oxidized [2Fe-2S]-[ferredoxin]. It participates in cofactor biosynthesis; biotin biosynthesis; biotin from 7,8-diaminononanoate: step 2/2. In terms of biological role, catalyzes the conversion of dethiobiotin (DTB) to biotin by the insertion of a sulfur atom into dethiobiotin via a radical-based mechanism. The chain is Biotin synthase from Helicobacter acinonychis (strain Sheeba).